The chain runs to 114 residues: Large ribosomal subunit protein uL18 (114 aa).

Belongs to the universal ribosomal protein uL18 family. Part of the 50S ribosomal subunit; part of the 5S rRNA/L5/L18/L25 subcomplex. Contacts the 5S and 23S rRNAs.

Functionally, this is one of the proteins that bind and probably mediate the attachment of the 5S RNA into the large ribosomal subunit, where it forms part of the central protuberance. The chain is Large ribosomal subunit protein uL18 from Porphyromonas gingivalis (strain ATCC BAA-308 / W83).